Reading from the N-terminus, the 158-residue chain is Succinate dehydrogenase assembly factor 2, mitochondrial (158 aa).

A mitochondrion-targeting transit peptide spans methionine 1–leucine 23.

Belongs to the SDHAF2 family. In terms of assembly, interacts with the flavoprotein subunit within the SDH catalytic dimer.

Its subcellular location is the mitochondrion matrix. In terms of biological role, plays an essential role in the assembly of succinate dehydrogenase (SDH), an enzyme complex (also referred to as respiratory complex II) that is a component of both the tricarboxylic acid (TCA) cycle and the mitochondrial electron transport chain, and which couples the oxidation of succinate to fumarate with the reduction of ubiquinone (coenzyme Q) to ubiquinol. Required for flavinylation (covalent attachment of FAD) of the flavoprotein subunit of the SDH catalytic dimer. This is Succinate dehydrogenase assembly factor 2, mitochondrial from Drosophila virilis (Fruit fly).